The sequence spans 426 residues: Limonoid 21-O-acetyltransferse (426 aa).

Active-site proton acceptor residues include histidine 152 and aspartate 365.

It belongs to the plant acyltransferase family. Monomer. In terms of tissue distribution, expressed in maturing fruits and in juice vesicles.

The enzyme catalyses isomeliandiol + acetyl-CoA = 21-O-acetyl-isomeliandiol + CoA. The protein operates within secondary metabolite biosynthesis; terpenoid biosynthesis. Acetyltransferase involved in the biosynthesis of limonoids triterpene natural products such as limonin, a compound with insecticidal activity responsible for the bitter taste in citrus. Catalyzes the formation of 21-O-acetyl-isomeliandiol from isomeliandiol. This chain is Limonoid 21-O-acetyltransferse, found in Citrus sinensis (Sweet orange).